The chain runs to 267 residues: Small ribosomal subunit protein uS3 (267 aa).

The 69-residue stretch at 43–111 (IRKEMSKDLE…QVQLNIFEVK (69 aa)) folds into the KH type-2 domain. A disordered region spans residues 216–267 (FEEQQAQQNNRPGRRGGDRRPRRGNRSAAPQAAEAPKAEAPAEAAPAAETKE). Residues 241–267 (RSAAPQAAEAPKAEAPAEAAPAAETKE) show a composition bias toward low complexity.

Belongs to the universal ribosomal protein uS3 family. Part of the 30S ribosomal subunit. Forms a tight complex with proteins S10 and S14.

Its function is as follows. Binds the lower part of the 30S subunit head. Binds mRNA in the 70S ribosome, positioning it for translation. The chain is Small ribosomal subunit protein uS3 from Bifidobacterium longum (strain DJO10A).